The sequence spans 342 residues: Signaling lymphocytic activation molecule (342 aa).

The N-terminal stretch at 1-26 (MDSRGFLSLRCLLVLALASKLSCGTG) is a signal peptide. Residues 27-237 (ESLMNCPEVP…CRPESSVPRQ (211 aa)) are Extracellular-facing. An Ig-like V-type domain is found at 29 to 138 (LMNCPEVPGK…QHFCLQLKLY (110 aa)). Residues Asn-57, Asn-102, Asn-125, Asn-150, Asn-157, Asn-189, and Asn-217 are each glycosylated (N-linked (GlcNAc...) asparagine). An Ig-like C2-type domain is found at 144–223 (PEIKVLNWTQ…PVSNRSWSFN (80 aa)). Intrachain disulfides connect Cys-158/Cys-228 and Cys-164/Cys-209. Residues 238 to 261 (WRLYAGLFLGGIVGVILIFEVVLL) traverse the membrane as a helical segment. The Cytoplasmic segment spans residues 262–342 (LLRRRGKTNH…VYASVTFPES (81 aa)). Positions 282–287 (TIYAQV) match the ITSM 1 motif. 3 positions are modified to phosphotyrosine; by FYN: Tyr-284, Tyr-310, and Tyr-334. The SH2-binding signature appears at 310–315 (YVAATE). Positions 332–337 (TVYASV) match the ITSM 2 motif.

As to quaternary structure, interacts (via cytoplasmic domain) with SH2D1A and SH2D1B; SH2D1A mediates association with FYN. Interacts (via cytoplasmic domain phosphorylated on tyrosine residues) with INPP5D and PTPN11; presence of SH2D1A facilitates binding to INPP5D. Interacts with MAP4K1. Interacts with PIK3C3, BECN1 and UVRAG; indicative for an association with PI3K complex II (PI3KC3-C2). Interacts with canine distemper virus HN protein; suggesting that it may serve as a receptor. Phosphorylated on tyrosine residues by FYN.

The protein localises to the cell membrane. Functionally, self-ligand receptor of the signaling lymphocytic activation molecule (SLAM) family. SLAM receptors triggered by homo- or heterotypic cell-cell interactions are modulating the activation and differentiation of a wide variety of immune cells and thus are involved in the regulation and interconnection of both innate and adaptive immune response. Activities are controlled by presence or absence of small cytoplasmic adapter proteins, SH2D1A/SAP and/or SH2D1B/EAT-2. SLAMF1-induced signal-transduction events in T-lymphocytes are different from those in B-cells. Two modes of SLAMF1 signaling seem to exist: one depending on SH2D1A (and perhaps SH2D1B) and another in which protein-tyrosine phosphatase 2C (PTPN11)-dependent signal transduction operates. Initially it has been proposed that association with SH2D1A prevents binding to inhibitory effectors including INPP5D/SHIP1 and PTPN11/SHP-2. However, signaling is also regulated by SH2D1A which can simultaneously interact with and recruit FYN which subsequently phosphorylates and activates SLAMF1. Mediates IL-2-independent proliferation of activated T cells during immune responses and induces IFN-gamma production. Downstreaming signaling involves INPP5D/SHIP1, DOK1 and DOK2 leading to inhibited IFN-gamma production in T-cells, and PRKCQ, BCL10 and NFKB1 leading to increased T-cell activation and Th2 cytokine production. Promotes T-cell receptor-induced IL-4 secretion by CD4(+) cells. Inhibits antigen receptor-mediated production of IFN-gamma, but not IL-2, in CD4(-)/CD8(-) T-cells. Required for IL-4 production by germinal centers T follicular helper (T(Fh))cells. May inhibit CD40-induced signal transduction in monocyte-derived dendritic cells. May play a role in allergic responses and may regulate allergen-induced Th2 cytokine and Th1 cytokine secretion. In conjunction with SLAMF6 controls the transition between positive selection and the subsequent expansion and differentiation of the thymocytic natural killer T (NKT) cell lineage. Involved in the peripheral differentiation of indifferent natural killer T (iNKT) cells toward a regulatory NKT2 type. In macrophages involved in down-regulation of IL-12, TNF-alpha and nitric oxide in response to lipopolysaccharide (LPS). In B-cells activates the ERK signaling pathway independently of SH2D1A but implicating both, SYK and INPP5D, and activates Akt signaling dependent on SYK and SH2D1A. In conjunction with SLAMF5 and SLAMF6 may be a negative regulator of the humoral immune response. The protein is Signaling lymphocytic activation molecule (SLAMF1) of Canis lupus familiaris (Dog).